Here is a 764-residue protein sequence, read N- to C-terminus: A-type ATP synthase subunit A (764 aa).

This sequence belongs to the ATPase alpha/beta chains family. In terms of assembly, has multiple subunits with at least A(3), B(3), C, D, E, F, H, I and proteolipid K(x). In terms of processing, this protein undergoes a protein self splicing that involves a post-translational excision of the VDE intervening region (intein) followed by peptide ligation.

Its subcellular location is the cell membrane. It catalyses the reaction ATP + H2O + 4 H(+)(in) = ADP + phosphate + 5 H(+)(out). In terms of biological role, component of the A-type ATP synthase that produces ATP from ADP in the presence of a proton gradient across the membrane. The A chain is the catalytic subunit. The sequence is that of A-type ATP synthase subunit A from Thermoplasma acidophilum (strain ATCC 25905 / DSM 1728 / JCM 9062 / NBRC 15155 / AMRC-C165).